Consider the following 61-residue polypeptide: Large ribosomal subunit protein uL30 (61 aa).

A disordered region spans residues 1–20 (MSQKKVTVRQVGSPIGRKPE).

Belongs to the universal ribosomal protein uL30 family. In terms of assembly, part of the 50S ribosomal subunit.

This chain is Large ribosomal subunit protein uL30, found in Hyphomonas neptunium (strain ATCC 15444).